Reading from the N-terminus, the 284-residue chain is tRNA-cytidine(32) 2-sulfurtransferase (284 aa).

A PP-loop motif motif is present at residues 45 to 50; sequence SGGKDS. The [4Fe-4S] cluster site is built by Cys-120, Cys-123, and Cys-211.

It belongs to the TtcA family. As to quaternary structure, homodimer. Requires Mg(2+) as cofactor. The cofactor is [4Fe-4S] cluster.

The protein localises to the cytoplasm. It catalyses the reaction cytidine(32) in tRNA + S-sulfanyl-L-cysteinyl-[cysteine desulfurase] + AH2 + ATP = 2-thiocytidine(32) in tRNA + L-cysteinyl-[cysteine desulfurase] + A + AMP + diphosphate + H(+). Its pathway is tRNA modification. Catalyzes the ATP-dependent 2-thiolation of cytidine in position 32 of tRNA, to form 2-thiocytidine (s(2)C32). The sulfur atoms are provided by the cysteine/cysteine desulfurase (IscS) system. The chain is tRNA-cytidine(32) 2-sulfurtransferase from Alcanivorax borkumensis (strain ATCC 700651 / DSM 11573 / NCIMB 13689 / SK2).